The following is an 86-amino-acid chain: Mu-theraphotoxin-Hhn1d (86 aa).

Residues 1-21 (MKASMFLALAGLALLFVVCYA) form the signal peptide. A propeptide spanning residues 22-49 (SESEEKEFSNELLSSVLAVDDNSKGEER) is cleaved from the precursor. Disulfide bonds link cysteine 51-cysteine 66, cysteine 58-cysteine 73, and cysteine 65-cysteine 80. Isoleucine amide is present on isoleucine 84.

It belongs to the neurotoxin 10 (Hwtx-1) family. 22 (Htx-4) subfamily. As to quaternary structure, monomer. Expressed by the venom gland.

The protein localises to the secreted. Its function is as follows. Neurotoxin. Selectively blocks neuronal tetrodotoxin-sensitive voltage-gated sodium channels (Nav). Does not affect tetrodotoxin-resistant voltage-gated sodium channels or calcium channels. The sequence is that of Mu-theraphotoxin-Hhn1d from Cyriopagopus hainanus (Chinese bird spider).